Consider the following 72-residue polypeptide: Translation initiation factor IF-1 (72 aa).

Positions 1–72 (MTKEEAIEVD…SRGRIMFRER (72 aa)) constitute an S1-like domain.

This sequence belongs to the IF-1 family. In terms of assembly, component of the 30S ribosomal translation pre-initiation complex which assembles on the 30S ribosome in the order IF-2 and IF-3, IF-1 and N-formylmethionyl-tRNA(fMet); mRNA recruitment can occur at any time during PIC assembly.

It is found in the cytoplasm. One of the essential components for the initiation of protein synthesis. Stabilizes the binding of IF-2 and IF-3 on the 30S subunit to which N-formylmethionyl-tRNA(fMet) subsequently binds. Helps modulate mRNA selection, yielding the 30S pre-initiation complex (PIC). Upon addition of the 50S ribosomal subunit IF-1, IF-2 and IF-3 are released leaving the mature 70S translation initiation complex. In Treponema pallidum (strain Nichols), this protein is Translation initiation factor IF-1.